A 221-amino-acid polypeptide reads, in one-letter code: MATAPTITDVQVEFLHFPAVVTSPATAKTYFLGGAGERGLTIEGKFIKFTAIGVYLEDKAVASLATKWKGKPSEELINTLDFYRDIISGPFEKLIRGSKILQLSGTEYSRKVMENCVAHLKSVGTYGDAEAKGIEEFAEAFKKVNFPPGASVFYRQSPDGILGLSFSEDATIPGEEAVVIENKAVSAAVLETMIGEHAVSPDLKRSLASRLPAVLNGGIIV.

Substrate is bound by residues Thr-50, Asn-115, and Thr-192.

It belongs to the chalcone isomerase family.

It carries out the reaction a chalcone = a flavanone.. It participates in secondary metabolite biosynthesis; flavonoid biosynthesis. In terms of biological role, catalyzes the intramolecular cyclization of bicyclic chalcones into tricyclic (S)-flavanones. Responsible for the isomerization of 4,2',4',6'-tetrahydroxychalcone (also termed chalcone) into naringenin. The chain is Chalcone--flavanone isomerase (CHI) from Phaseolus vulgaris (Kidney bean).